A 1220-amino-acid polypeptide reads, in one-letter code: Plasma membrane calcium-transporting ATPase 1 (1220 aa).

Glycine 2 is subject to N-acetylglycine. The Cytoplasmic segment spans residues 2–105 (GDMANNSVVY…KTFLQLVWEA (104 aa)). Serine 8 and serine 17 each carry phosphoserine. Residues 106-126 (LQDVTLIILEIAAIVSLGLSF) traverse the membrane as a helical segment. At 127–154 (YQPPEGDNALCGEVSVGEEEGEGETGWI) the chain is on the extracellular side. A helical membrane pass occupies residues 155 to 175 (EGAAILLSVVCVVLVTAFNDW). At 176–366 (SKEKQFRGLQ…KEKSVLQGKL (191 aa)) the chain is on the cytoplasmic side. The disordered stretch occupies residues 297 to 356 (EEEKKDEKKKEKKNKKQDGAIENRNKAKAQDGEPMEMQPLKSEEGGDGDEKDKKKANLPK). Composition is skewed to basic and acidic residues over residues 312-327 (KQDG…KAQD) and 337-356 (KSEE…NLPK). Serine 338 carries the phosphoserine modification. Residues 367 to 386 (TKLAVQIGKAGLLMSAITVI) traverse the membrane as a helical segment. Over 387–418 (ILVLYFLIDTFWVQKRPWLAECTPIYIQYFVK) the chain is Extracellular. A helical transmembrane segment spans residues 419–439 (FFIIGVTVLVVAVPEGLPLPV). The Cytoplasmic segment spans residues 440–855 (TISLAYSVNE…RNVYDSISKF (416 aa)). The active-site 4-aspartylphosphate intermediate is aspartate 475. 3 residues coordinate Mg(2+): aspartate 475, threonine 477, and aspartate 797. A helical transmembrane segment spans residues 856–876 (LQFQLTVNVVAVIVAFTGACI). Residues 877-882 (TQDSPL) lie on the Extracellular side of the membrane. A helical membrane pass occupies residues 883-903 (KAVQMLWVNLIMDTLASLALA). The Cytoplasmic segment spans residues 904-927 (TEPPTESLLLGKPYGRNKPLISRT). Residues 928–948 (MMKNILGHAFYQLVVVFTLLL) traverse the membrane as a helical segment. Topologically, residues 949–971 (AGEKFFDIDSGRNAPLHAPPSEH) are extracellular. Residues 972 to 991 (YTIVFNIFVLMQLFNEINAR) form a helical membrane-spanning segment. Over 992-1005 (KIHGERNVFEGIFN) the chain is Cytoplasmic. Residues 1006–1027 (NAIFCTIVLGTFVVQIIIVQFA) form a helical membrane-spanning segment. At 1028–1039 (GKPFSCSELSVE) the chain is on the extracellular side. A helical membrane pass occupies residues 1040-1060 (QWLWSIFLGMGTLLWGQLIST). The Cytoplasmic portion of the chain corresponds to 1061-1220 (IPTSRLKFQK…SPLHSLETSL (160 aa)). The calmodulin-binding subdomain A stretch occupies residues 1100–1117 (LRRWQILWFRGLNRIQTQ). Threonine 1116 is modified (phosphothreonine; by PKC). A required for basolateral membrane targeting region spans residues 1118-1220 (IRVVNAFRSS…SPLHSLETSL (103 aa)). Residues serine 1140 and serine 1155 each carry the phosphoserine modification. A disordered region spans residues 1160 to 1220 (PLIDDTDAED…SPLHSLETSL (61 aa)). A Phosphothreonine modification is found at threonine 1165. Position 1177 is a phosphoserine; by PKA (serine 1177). A phosphoserine mark is found at serine 1178 and serine 1182. The span at 1200–1220 (MNKSATSSSPGSPLHSLETSL) shows a compositional bias: polar residues.

The protein belongs to the cation transport ATPase (P-type) (TC 3.A.3) family. Type IIB subfamily. As to quaternary structure, monomer. Dimer. Oligomer. Calmodulin binding. Interacts with PDZD11. Interacts with SLC35G1 and STIM1. Interacts with YWHAE; interacts with the monomeric and dimeric forms of the YWHAE but prefer the monomer form; this interaction inhibits calcium-transporting ATPase activity. Interacts with NPTN; this interaction stabilizes ATP2B1 and increases ATPase activity; this interaction controls T cell calcium homeostasis following T cell activation. Interacts with EPB41; regulates small intestinal calcium absorption through regulation of membrane expression of ATP2B1. In terms of tissue distribution, isoform B is ubiquitously expressed and is the most predominant isoform. Isoform C is expressed at much lower levels in all tissues tested, but liver, while isoform A is found only in aorta, brain and stomach.

The protein localises to the cell membrane. Its subcellular location is the basolateral cell membrane. It is found in the synapse. The protein resides in the presynaptic cell membrane. It localises to the cytoplasmic vesicle. The protein localises to the secretory vesicle. Its subcellular location is the synaptic vesicle membrane. The enzyme catalyses Ca(2+)(in) + ATP + H2O = Ca(2+)(out) + ADP + phosphate + H(+). Functionally, catalyzes the hydrolysis of ATP coupled with the transport of calcium from the cytoplasm to the extracellular space thereby maintaining intracellular calcium homeostasis. Plays a role in blood pressure regulation through regulation of intracellular calcium concentration and nitric oxide production leading to regulation of vascular smooth muscle cells vasoconstriction. Positively regulates bone mineralization through absorption of calcium from the intestine. Plays dual roles in osteoclast differentiation and survival by regulating RANKL-induced calcium oscillations in preosteoclasts and mediating calcium extrusion in mature osteoclasts. Regulates insulin sensitivity through calcium/calmodulin signaling pathway by regulating AKT1 activation and NOS3 activation in endothelial cells. May play a role in synaptic transmission by modulating calcium and proton dynamics at the synaptic vesicles. In Oryctolagus cuniculus (Rabbit), this protein is Plasma membrane calcium-transporting ATPase 1.